A 104-amino-acid polypeptide reads, in one-letter code: Small ribosomal subunit protein uS10 (104 aa).

Belongs to the universal ribosomal protein uS10 family. Part of the 30S ribosomal subunit.

Functionally, involved in the binding of tRNA to the ribosomes. The polypeptide is Small ribosomal subunit protein uS10 (Aquifex aeolicus (strain VF5)).